A 622-amino-acid chain; its full sequence is MSRSSIPASRRVSRAKAQAFMDSLTGSSYFPNSRRIYLQGKTPSVHVPMREIKLHPTLIGKNGEHYEDNQPIPVYDTSGPYGDPTIAINVRTGLNRLREIWILARQDSEPISNNNNDRQSSDKQLSFTTNYNPRRASYGRCITQLHYARAGIITPEMEFIALRENMGRERISSNVLHQQHLGSNFGAKKADHITAEFVRQEVAAGRAIIPSNINHPESEPMIIGRNFLVKVNANIGNSAVTSSIEEEVEKLVWATRWGADTVMDLSTGSYIHETREWILRNSPVPIGTVPIYQALEKVNGVIENLNWDIFYETLLEQANQGVDYFTIHAGVLKRYVLLTASRLTGIVSRGGSIMAQWSLVHNQENFLYEHFSEICKLCAAYDIALSLGDGLRPGSVQDANDEAQFSELHTLGELTKIAWEYDVQVMIEGPGHIPLHMIERNMTDQLKYCHEAPFYTLGPLTTDIAPGYDHFTSGIGAALIGWFGCAMLCYVTPKEHLGLPNKEDVKQGLIAYKIAAHAADLAKGHPGAQIRDNAMSKARFEFRWEDQFNLALDPFTARMYHDETIPQTAGKLANFCSMCGPKFCSMKLSKKIRNYTNMKNIKTISNSFMNKLDNSGIKNADR.

Residues 109–130 are disordered; it reads EPISNNNNDRQSSDKQLSFTTN. Substrate-binding positions include Asn-234, Met-263, Tyr-292, His-328, 348 to 350, 389 to 392, and Glu-428; these read SRG and DGLR. His-432 lines the Zn(2+) pocket. Substrate is bound at residue Tyr-455. His-496 contributes to the Zn(2+) binding site. [4Fe-4S] cluster is bound by residues Cys-576, Cys-579, and Cys-584.

It belongs to the ThiC family. As to quaternary structure, homodimer. [4Fe-4S] cluster is required as a cofactor.

It carries out the reaction 5-amino-1-(5-phospho-beta-D-ribosyl)imidazole + S-adenosyl-L-methionine = 4-amino-2-methyl-5-(phosphooxymethyl)pyrimidine + CO + 5'-deoxyadenosine + formate + L-methionine + 3 H(+). The protein operates within cofactor biosynthesis; thiamine diphosphate biosynthesis. Catalyzes the synthesis of the hydroxymethylpyrimidine phosphate (HMP-P) moiety of thiamine from aminoimidazole ribotide (AIR) in a radical S-adenosyl-L-methionine (SAM)-dependent reaction. In Baumannia cicadellinicola subsp. Homalodisca coagulata, this protein is Phosphomethylpyrimidine synthase.